Reading from the N-terminus, the 59-residue chain is Alpha-conotoxin CIA (59 aa).

An N-terminal signal peptide occupies residues 1-16 (MFTVFLLVVLTITVVS). A propeptide spanning residues 17–42 (FPSDRASDGRDDEAKDERSDMYKSKR) is cleaved from the precursor. Intrachain disulfides connect Cys46–Cys51 and Cys47–Cys57. Cys57 carries the cysteine amide modification.

The protein belongs to the conotoxin A superfamily. Expressed by the venom duct.

The protein resides in the secreted. In terms of biological role, alpha-conotoxins act on postsynaptic membranes, they bind to the nicotinic acetylcholine receptors (nAChR) and thus inhibit them. This toxin blocks the rat muscle nAChRs alpha-1-beta-1-gamma-delta (CHRNA1-CHRNB1-CHRNG-CHRND) (IC(50)=5.7 nM) and the rat neuronal nAChR alpha-3-beta-2/CHRNA3-CHRNB2 (IC(50)=2060 nM). In vivo, intramuscular injection into zebrafish produces rapid flaccid paralysis. This Conus catus (Cat cone) protein is Alpha-conotoxin CIA.